The primary structure comprises 443 residues: Probable D-serine dehydratase (443 aa).

Residue Lys-118 is modified to N6-(pyridoxal phosphate)lysine.

This sequence belongs to the serine/threonine dehydratase family. DsdA subfamily. Pyridoxal 5'-phosphate is required as a cofactor.

It catalyses the reaction D-serine = pyruvate + NH4(+). The protein is Probable D-serine dehydratase of Aeromonas salmonicida (strain A449).